Reading from the N-terminus, the 138-residue chain is Putative pre-16S rRNA nuclease (138 aa).

This sequence belongs to the YqgF nuclease family.

Its subcellular location is the cytoplasm. Could be a nuclease involved in processing of the 5'-end of pre-16S rRNA. The protein is Putative pre-16S rRNA nuclease of Salmonella schwarzengrund (strain CVM19633).